The sequence spans 274 residues: MNSMNILNKVKNVKSYTRLVRQGFLSQQRNHSVSVNEVDHFNELAKTWWDWDGGSRLLHLMNSTRLDFMTEVFRERNCFSGKKILDIGCGGGILSESMARLGASVTAVDASPMAIEVAKKHASLDPVLNGRLEYIHGSVEGSQLPTTFDVVTCMEVLEHVEQPRDFLFSLMEKVKPNGRLVLSTISRTLLARLLTITLAEHVLRIVPVGTHTFEKFIRADELSNFLKEQNWIINDIRGVCYNPLKQQWTLDKPGSSGLGLSCNYFLSAQKPMSA.

A mitochondrion-targeting transit peptide spans 1–30; sequence MNSMNILNKVKNVKSYTRLVRQGFLSQQRN. Residues arginine 65, glycine 88, aspartate 109, and methionine 154 each coordinate S-adenosyl-L-methionine. Residues glutamate 155, glutamate 158, and histidine 159 each contribute to the Mg(2+) site.

This sequence belongs to the class I-like SAM-binding methyltransferase superfamily. UbiG/COQ3 family. As to quaternary structure, component of a multi-subunit COQ enzyme complex, composed of at least coq3, coq4, coq5, coq6, coq7 and coq9. Mg(2+) serves as cofactor.

The protein resides in the mitochondrion inner membrane. It catalyses the reaction 3,4-dihydroxy-5-(all-trans-decaprenyl)benzoate + S-adenosyl-L-methionine = 4-hydroxy-3-methoxy-5-(all-trans-decaprenyl)benzoate + S-adenosyl-L-homocysteine + H(+). The catalysed reaction is a 3-demethylubiquinone + S-adenosyl-L-methionine = a ubiquinone + S-adenosyl-L-homocysteine. It carries out the reaction 3-demethylubiquinol-10 + S-adenosyl-L-methionine = ubiquinol-10 + S-adenosyl-L-homocysteine + H(+). It participates in cofactor biosynthesis; ubiquinone biosynthesis. In terms of biological role, O-methyltransferase required for two non-consecutive steps during ubiquinone biosynthesis. Catalyzes the 2 O-methylation of 3,4-dihydroxy-5-(all-trans-decaprenyl)benzoic acid into 4-hydroxy-3-methoxy-5-(all-trans-decaprenyl)benzoic acid. Also catalyzes the last step of ubiquinone biosynthesis by mediating methylation of 3-demethylubiquinone into ubiquinone. Also able to mediate the methylation of 3-demethylubiquinol-10 into ubiquinol-10. This chain is Ubiquinone biosynthesis O-methyltransferase, mitochondrial, found in Schizosaccharomyces pombe (strain 972 / ATCC 24843) (Fission yeast).